The following is a 330-amino-acid chain: Methionyl-tRNA formyltransferase (330 aa).

121-124 (SLLP) contributes to the (6S)-5,6,7,8-tetrahydrofolate binding site.

It belongs to the Fmt family.

The enzyme catalyses L-methionyl-tRNA(fMet) + (6R)-10-formyltetrahydrofolate = N-formyl-L-methionyl-tRNA(fMet) + (6S)-5,6,7,8-tetrahydrofolate + H(+). Functionally, attaches a formyl group to the free amino group of methionyl-tRNA(fMet). The formyl group appears to play a dual role in the initiator identity of N-formylmethionyl-tRNA by promoting its recognition by IF2 and preventing the misappropriation of this tRNA by the elongation apparatus. The polypeptide is Methionyl-tRNA formyltransferase (Burkholderia orbicola (strain MC0-3)).